A 304-amino-acid chain; its full sequence is Nicotinamide/nicotinic acid mononucleotide adenylyltransferase 2 (304 aa).

NAD(+)-binding residues include S16 and F17. H24 provides a ligand contact to ATP. NAD(+)-binding residues include W92 and T95. 2 S-palmitoyl cysteine lipidation sites follow: C161 and C162. G197, D199, L209, W210, and R229 together coordinate NAD(+). 268-271 contacts ATP; the sequence is TKSR.

This sequence belongs to the eukaryotic NMN adenylyltransferase family. Monomer. Mg(2+) serves as cofactor.

Its subcellular location is the golgi apparatus membrane. The protein localises to the cytoplasmic vesicle membrane. It localises to the cytoplasm. It is found in the cell projection. The protein resides in the axon. The enzyme catalyses beta-nicotinamide D-ribonucleotide + ATP + H(+) = diphosphate + NAD(+). It catalyses the reaction nicotinate beta-D-ribonucleotide + ATP + H(+) = deamido-NAD(+) + diphosphate. It participates in cofactor biosynthesis; NAD(+) biosynthesis; NAD(+) from nicotinamide D-ribonucleotide: step 1/1. It functions in the pathway cofactor biosynthesis; NAD(+) biosynthesis; deamido-NAD(+) from nicotinate D-ribonucleotide: step 1/1. Functionally, nicotinamide/nicotinate-nucleotide adenylyltransferase that acts as an axon maintenance factor. Axon survival factor required for the maintenance of healthy axons: acts by delaying Wallerian axon degeneration, an evolutionarily conserved process that drives the loss of damaged axons. Catalyzes the formation of NAD(+) from nicotinamide mononucleotide (NMN) and ATP. Can also use the deamidated form; nicotinic acid mononucleotide (NaMN) as substrate but with a lower efficiency. Also catalyzes the reverse reaction, i.e. the pyrophosphorolytic cleavage of NAD(+). For the pyrophosphorolytic activity prefers NAD(+), NADH and NaAD as substrates and degrades nicotinic acid adenine dinucleotide phosphate (NHD) less effectively. Also acts as an activator of ADP-ribosylation by supporting the catalytic activity of PARP16 and promoting mono-ADP-ribosylation of ribosomes by PARP16. May be involved in the maintenance of axonal integrity. This is Nicotinamide/nicotinic acid mononucleotide adenylyltransferase 2 (nmnat2) from Danio rerio (Zebrafish).